Reading from the N-terminus, the 567-residue chain is Proline--tRNA ligase (567 aa).

Belongs to the class-II aminoacyl-tRNA synthetase family. ProS type 1 subfamily. As to quaternary structure, homodimer.

The protein resides in the cytoplasm. It catalyses the reaction tRNA(Pro) + L-proline + ATP = L-prolyl-tRNA(Pro) + AMP + diphosphate. Catalyzes the attachment of proline to tRNA(Pro) in a two-step reaction: proline is first activated by ATP to form Pro-AMP and then transferred to the acceptor end of tRNA(Pro). As ProRS can inadvertently accommodate and process non-cognate amino acids such as alanine and cysteine, to avoid such errors it has two additional distinct editing activities against alanine. One activity is designated as 'pretransfer' editing and involves the tRNA(Pro)-independent hydrolysis of activated Ala-AMP. The other activity is designated 'posttransfer' editing and involves deacylation of mischarged Ala-tRNA(Pro). The misacylated Cys-tRNA(Pro) is not edited by ProRS. The chain is Proline--tRNA ligase from Geobacillus kaustophilus (strain HTA426).